A 551-amino-acid chain; its full sequence is Arginine--tRNA ligase (551 aa).

The 'HIGH' region signature appears at A123–R133.

Belongs to the class-I aminoacyl-tRNA synthetase family. In terms of assembly, monomer.

Its subcellular location is the cytoplasm. The catalysed reaction is tRNA(Arg) + L-arginine + ATP = L-arginyl-tRNA(Arg) + AMP + diphosphate. This Chlorobaculum parvum (strain DSM 263 / NCIMB 8327) (Chlorobium vibrioforme subsp. thiosulfatophilum) protein is Arginine--tRNA ligase.